The primary structure comprises 491 residues: UDP-N-acetylmuramate--L-alanine ligase (491 aa).

115 to 121 lines the ATP pocket; the sequence is GTHGKTT.

This sequence belongs to the MurCDEF family.

Its subcellular location is the cytoplasm. The enzyme catalyses UDP-N-acetyl-alpha-D-muramate + L-alanine + ATP = UDP-N-acetyl-alpha-D-muramoyl-L-alanine + ADP + phosphate + H(+). It participates in cell wall biogenesis; peptidoglycan biosynthesis. Functionally, cell wall formation. The chain is UDP-N-acetylmuramate--L-alanine ligase from Parvibaculum lavamentivorans (strain DS-1 / DSM 13023 / NCIMB 13966).